The sequence spans 520 residues: Ribonuclease Y (520 aa).

The chain crosses the membrane as a helical span at residues 3-23; it reads IVIVVISILLALIVGIVVGYL. Residues 81–118 show a composition bias toward basic and acidic residues; that stretch reads RMEAQKQENRLMQKEENLDRKSETLDKRESSLESKEQS. Residues 81–125 are disordered; the sequence is RMEAQKQENRLMQKEENLDRKSETLDKRESSLESKEQSLTEQQQQ. One can recognise a KH domain in the interval 210–273; sequence TVSVVNLPND…EIARMALEKL (64 aa). Positions 336–429 constitute an HD domain; sequence GLKHSAEVAY…VAAADALSAA (94 aa).

It belongs to the RNase Y family.

The protein localises to the cell membrane. Its function is as follows. Endoribonuclease that initiates mRNA decay. The sequence is that of Ribonuclease Y from Oceanobacillus iheyensis (strain DSM 14371 / CIP 107618 / JCM 11309 / KCTC 3954 / HTE831).